Consider the following 429-residue polypeptide: Histidinol dehydrogenase (429 aa).

Residues Tyr-130, Gln-191, and Asn-214 each contribute to the NAD(+) site. Substrate contacts are provided by Ser-237, Gln-259, and His-262. Residues Gln-259 and His-262 each coordinate Zn(2+). Residues Glu-327 and His-328 each act as proton acceptor in the active site. Residues His-328, Asp-361, Glu-415, and His-420 each contribute to the substrate site. Asp-361 contacts Zn(2+). His-420 is a binding site for Zn(2+).

The protein belongs to the histidinol dehydrogenase family. Requires Zn(2+) as cofactor.

It catalyses the reaction L-histidinol + 2 NAD(+) + H2O = L-histidine + 2 NADH + 3 H(+). The protein operates within amino-acid biosynthesis; L-histidine biosynthesis; L-histidine from 5-phospho-alpha-D-ribose 1-diphosphate: step 9/9. In terms of biological role, catalyzes the sequential NAD-dependent oxidations of L-histidinol to L-histidinaldehyde and then to L-histidine. The polypeptide is Histidinol dehydrogenase (Nitrobacter winogradskyi (strain ATCC 25391 / DSM 10237 / CIP 104748 / NCIMB 11846 / Nb-255)).